We begin with the raw amino-acid sequence, 994 residues long: Chromatin modification-related protein vid21 (994 aa).

Disordered regions lie at residues 122–275 (PDNL…APPV) and 288–308 (PKVD…ENDV). Basic and acidic residues-rich tracts occupy residues 158–171 (TIHK…KETI), 178–191 (KEVE…EEKG), 204–233 (LTEE…KEHE), 254–265 (VESKEVKKKEVS), and 288–305 (PKVD…KVTE). Phosphoserine occurs at positions 298 and 378. The 74-residue stretch at 475–548 (PKRQNEMPRL…SKNKKPYMQE (74 aa)) folds into the HSA domain. The disordered stretch occupies residues 671–693 (SFMEKKARSDENQLDGNKIKDDN). Over residues 672-693 (FMEKKARSDENQLDGNKIKDDN) the composition is skewed to basic and acidic residues. The Myb-like domain maps to 713–773 (KDIRPEAPWL…DCFERWIQVD (61 aa)). Disordered stretches follow at residues 857 to 880 (TMTK…PSPL) and 975 to 994 (EQIH…ERTQ). A coiled-coil region spans residues 880–912 (LELSRLKSEREAQIQQIQAQRNFAQLQSQNRAL).

It belongs to the EAF1 family. In terms of assembly, component of the NuA4 histone acetyltransferase complex.

It localises to the nucleus. In terms of biological role, component of the NuA4 histone acetyltransferase complex which is involved in transcriptional activation of selected genes principally by acetylation of nucleosomal histone H4 and H2A. The NuA4 complex is also involved in DNA repair. This is Chromatin modification-related protein vid21 (vid21) from Schizosaccharomyces pombe (strain 972 / ATCC 24843) (Fission yeast).